The chain runs to 466 residues: Alpha-1A adrenergic receptor (466 aa).

Over 1–27 (MVFLSGNASDSSNCTQPPAPVNISKAI) the chain is Extracellular. Asn-7, Asn-13, and Asn-22 each carry an N-linked (GlcNAc...) asparagine glycan. A helical membrane pass occupies residues 28–51 (LLGVILGGLILFGVLGNILVILSV). Residues 52–64 (ACHRHLHSVTHYY) lie on the Cytoplasmic side of the membrane. The helical transmembrane segment at 65 to 88 (IVNLAVADLLLTSTVLPFSAIFEV) threads the bilayer. At 89-99 (LGYWAFGRVFC) the chain is on the extracellular side. An intrachain disulfide couples Cys-99 to Cys-176. A helical transmembrane segment spans residues 100 to 122 (NIWAAVDVLCCTASIMGLCIISI). Residues 123–143 (DRYIGVSYPLRYPTIVTQRRG) are Cytoplasmic-facing. Residues 144-167 (LMALLCVWALSLVISIGPLFGWRQ) form a helical membrane-spanning segment. Residues 168–181 (PAPEDETICQINEE) are Extracellular-facing. The helical transmembrane segment at 182-205 (PGYVLFSALGSFYLPLAIILVMYC) threads the bilayer. Over 206–273 (RVYVVAKRES…FSREKKAAKT (68 aa)) the chain is Cytoplasmic. Ser-215 carries the post-translational modification Phosphoserine; by PKA. Residues 274-297 (LGIVVGCFVLCWLPFFLVMPIGSF) form a helical membrane-spanning segment. Residues 298-305 (FPDFKPSE) lie on the Extracellular side of the membrane. The helical transmembrane segment at 306–329 (TVFKIVFWLGYLNSCINPIIYPCS) threads the bilayer. Residues 330–466 (SQEFKKAFQN…ISLSENGEEV (137 aa)) lie on the Cytoplasmic side of the membrane. The Nuclear localization signal motif lies at 334-349 (KKAFQNVLRIQCLCRK). Residue Cys-345 is the site of S-palmitoyl cysteine attachment.

This sequence belongs to the G-protein coupled receptor 1 family. Adrenergic receptor subfamily. ADRA1A sub-subfamily. In terms of assembly, homo- and heterooligomer. Heterooligomerizes with ADRA1B homooligomers in cardiac myocytes. Interacts with CAVIN4. In terms of processing, C-terminal Ser or Thr residues may be phosphorylated. In terms of tissue distribution, expressed in heart, brain, liver and prostate, but not in kidney, lung, adrenal, aorta and pituitary. Within the prostate, expressed in the apex, base, periurethral and lateral lobe. Isoform 4 is the most abundant isoform expressed in the prostate with high levels also detected in liver and heart.

Its subcellular location is the nucleus membrane. The protein resides in the cell membrane. The protein localises to the cytoplasm. It is found in the membrane. It localises to the caveola. Its function is as follows. This alpha-adrenergic receptor mediates its action by association with G proteins that activate a phosphatidylinositol-calcium second messenger system. Its effect is mediated by G(q) and G(11) proteins. Nuclear ADRA1A-ADRA1B heterooligomers regulate phenylephrine(PE)-stimulated ERK signaling in cardiac myocytes. This Homo sapiens (Human) protein is Alpha-1A adrenergic receptor (ADRA1A).